The primary structure comprises 159 residues: Ribosomal RNA large subunit methyltransferase H (159 aa).

S-adenosyl-L-methionine contacts are provided by residues leucine 76, glycine 108, and 127 to 132 (FSKMTF).

This sequence belongs to the RNA methyltransferase RlmH family. Homodimer.

It localises to the cytoplasm. The catalysed reaction is pseudouridine(1915) in 23S rRNA + S-adenosyl-L-methionine = N(3)-methylpseudouridine(1915) in 23S rRNA + S-adenosyl-L-homocysteine + H(+). In terms of biological role, specifically methylates the pseudouridine at position 1915 (m3Psi1915) in 23S rRNA. The chain is Ribosomal RNA large subunit methyltransferase H from Clostridium botulinum (strain Okra / Type B1).